The following is a 975-amino-acid chain: Translation initiation factor IF-2 (975 aa).

2 stretches are compositionally biased toward basic and acidic residues: residues 48–63 (DHLRKSHGATDGDKRK) and 120–177 (AELK…EAAA). Disordered stretches follow at residues 48–85 (DHLRKSHGATDGDKRKITLTRRHTSEIKQADATGKART) and 98–390 (KRDD…PTEP). Low complexity predominate over residues 178 to 211 (KRAAAAQAEAAQQAAAAREQAQRAQSEPAEQSAQ). Residues 212–263 (DEARAAAERAAQREAAKKAEDAAREAADKARAEQEEIRKRREAAEAEARAIR) are compositionally biased toward basic and acidic residues. Low complexity predominate over residues 302–330 (KPAGEAAAARPAAKKPASGAPAPAAAPAG). Residues 359 to 372 (SSGGVDRGWRGGPK) show a composition bias toward gly residues. A tr-type G domain is found at 475–644 (PRPPVVTVMG…LLQAEVLELK (170 aa)). The segment at 484 to 491 (GHVDHGKT) is G1. Residue 484–491 (GHVDHGKT) participates in GTP binding. The tract at residues 509 to 513 (GITQH) is G2. The tract at residues 530 to 533 (DTPG) is G3. Residues 530-534 (DTPGH) and 584-587 (NKID) each bind GTP. Residues 584 to 587 (NKID) form a G4 region. The segment at 620-622 (SAK) is G5.

Belongs to the TRAFAC class translation factor GTPase superfamily. Classic translation factor GTPase family. IF-2 subfamily.

It is found in the cytoplasm. Its function is as follows. One of the essential components for the initiation of protein synthesis. Protects formylmethionyl-tRNA from spontaneous hydrolysis and promotes its binding to the 30S ribosomal subunits. Also involved in the hydrolysis of GTP during the formation of the 70S ribosomal complex. This chain is Translation initiation factor IF-2, found in Burkholderia pseudomallei (strain 1106a).